The primary structure comprises 255 residues: D-aminoacyl-tRNA deacylase (255 aa).

This sequence belongs to the DtdA deacylase family. In terms of assembly, monomer. Zn(2+) is required as a cofactor.

The catalysed reaction is a D-aminoacyl-tRNA + H2O = a tRNA + a D-alpha-amino acid + H(+). The enzyme catalyses glycyl-tRNA(Ala) + H2O = tRNA(Ala) + glycine + H(+). Functionally, D-aminoacyl-tRNA deacylase with broad substrate specificity. By recycling D-aminoacyl-tRNA to D-amino acids and free tRNA molecules, this enzyme counteracts the toxicity associated with the formation of D-aminoacyl-tRNA entities in vivo. The chain is D-aminoacyl-tRNA deacylase from Picrophilus torridus (strain ATCC 700027 / DSM 9790 / JCM 10055 / NBRC 100828 / KAW 2/3).